The sequence spans 445 residues: Phosphoglucosamine mutase (445 aa).

The active-site Phosphoserine intermediate is the Ser-102. Residues Ser-102, Asp-241, Asp-243, and Asp-245 each coordinate Mg(2+). Residue Ser-102 is modified to Phosphoserine.

This sequence belongs to the phosphohexose mutase family. Requires Mg(2+) as cofactor. In terms of processing, activated by phosphorylation.

It carries out the reaction alpha-D-glucosamine 1-phosphate = D-glucosamine 6-phosphate. Its function is as follows. Catalyzes the conversion of glucosamine-6-phosphate to glucosamine-1-phosphate. This chain is Phosphoglucosamine mutase, found in Escherichia coli O139:H28 (strain E24377A / ETEC).